The sequence spans 142 residues: Small heat shock protein IbpB (142 aa).

The 112-residue stretch at 26–137 folds into the sHSP domain; that stretch reads SGESQSFPPY…APQRIAINER (112 aa).

The protein belongs to the small heat shock protein (HSP20) family. In terms of assembly, homodimer. Forms homomultimers of about 100-150 subunits at optimal growth temperatures. Conformation changes to oligomers at high temperatures or high ionic concentrations. The decrease in size of the multimers is accompanied by an increase in chaperone activity.

The protein localises to the cytoplasm. In terms of biological role, associates with aggregated proteins, together with IbpA, to stabilize and protect them from irreversible denaturation and extensive proteolysis during heat shock and oxidative stress. Aggregated proteins bound to the IbpAB complex are more efficiently refolded and reactivated by the ATP-dependent chaperone systems ClpB and DnaK/DnaJ/GrpE. Its activity is ATP-independent. This is Small heat shock protein IbpB from Salmonella newport (strain SL254).